The chain runs to 321 residues: Lipoyl synthase (321 aa).

Residues Cys-68, Cys-73, Cys-79, Cys-94, Cys-98, Cys-101, and Ser-308 each contribute to the [4Fe-4S] cluster site. Residues Phe-80–Thr-297 form the Radical SAM core domain.

It belongs to the radical SAM superfamily. Lipoyl synthase family. It depends on [4Fe-4S] cluster as a cofactor.

The protein localises to the cytoplasm. It carries out the reaction [[Fe-S] cluster scaffold protein carrying a second [4Fe-4S](2+) cluster] + N(6)-octanoyl-L-lysyl-[protein] + 2 oxidized [2Fe-2S]-[ferredoxin] + 2 S-adenosyl-L-methionine + 4 H(+) = [[Fe-S] cluster scaffold protein] + N(6)-[(R)-dihydrolipoyl]-L-lysyl-[protein] + 4 Fe(3+) + 2 hydrogen sulfide + 2 5'-deoxyadenosine + 2 L-methionine + 2 reduced [2Fe-2S]-[ferredoxin]. Its pathway is protein modification; protein lipoylation via endogenous pathway; protein N(6)-(lipoyl)lysine from octanoyl-[acyl-carrier-protein]: step 2/2. In terms of biological role, catalyzes the radical-mediated insertion of two sulfur atoms into the C-6 and C-8 positions of the octanoyl moiety bound to the lipoyl domains of lipoate-dependent enzymes, thereby converting the octanoylated domains into lipoylated derivatives. The chain is Lipoyl synthase from Shewanella halifaxensis (strain HAW-EB4).